We begin with the raw amino-acid sequence, 165 residues long: Lipoprotein signal peptidase (165 aa).

2 helical membrane-spanning segments follow: residues 68-88 (PLLP…GLFG) and 100-120 (GFLL…GEVI). Catalysis depends on residues Asp-121 and Asp-137. A helical transmembrane segment spans residues 130-150 (FPVFNIADISINVGLACLIFA).

The protein belongs to the peptidase A8 family.

The protein resides in the cell inner membrane. The catalysed reaction is Release of signal peptides from bacterial membrane prolipoproteins. Hydrolyzes -Xaa-Yaa-Zaa-|-(S,diacylglyceryl)Cys-, in which Xaa is hydrophobic (preferably Leu), and Yaa (Ala or Ser) and Zaa (Gly or Ala) have small, neutral side chains.. The protein operates within protein modification; lipoprotein biosynthesis (signal peptide cleavage). In terms of biological role, this protein specifically catalyzes the removal of signal peptides from prolipoproteins. This Acaryochloris marina (strain MBIC 11017) protein is Lipoprotein signal peptidase.